Reading from the N-terminus, the 593-residue chain is Early nodule-specific protein 2 (593 aa).

Pro residues predominate over residues 71–110 (EKPPIYEPPPTEEPPPVYKPPIIHPPPNYKPPAHTPPIYH). Residues 71–593 (EKPPIYEPPP…GHYPPYKKNQ (523 aa)) form a disordered region. Composition is skewed to basic and acidic residues over residues 123-138 (PYEK…EYQP) and 166-195 (PPYE…EKPP). The segment covering 196-210 (PEYTPPYEKPPPEYQ) has biased composition (pro residues). Basic and acidic residues-rich tracts occupy residues 227 to 265 (PPHE…EKPP) and 275 to 292 (PPHE…EKPP). Residues 294-306 (VHPPPEYQPPYLK) are compositionally biased toward pro residues. 4 stretches are compositionally biased toward basic and acidic residues: residues 339 to 350 (PPHEKPPHEHPP), 360 to 372 (PPPE…ENPP), 382 to 394 (PPHE…EHPP), and 404 to 421 (PPPE…EHPP). Residues 422–435 (PEYQPPQENPPPEY) show a composition bias toward pro residues. Basic and acidic residues predominate over residues 506-522 (PRHEKPMPKYQPPHEKL). The span at 532-558 (KTPPPQAYHPPPPIYHHPPFHPPPHVK) shows a compositional bias: pro residues.

This sequence belongs to the nodulin 75 family.

In terms of biological role, involved in early stages of root nodule development. The polypeptide is Early nodule-specific protein 2 (Medicago truncatula (Barrel medic)).